Here is a 366-residue protein sequence, read N- to C-terminus: RISC-loading complex subunit TARBP2 (366 aa).

3 sufficient for interaction with PRKRA regions span residues 22-105, 152-234, and 287-366; these read MLAA…EPAL, SPQQ…DARD, and LGAL…AGSK. A DRBM 1 domain is found at 30 to 97; it reads TPISLLQEYG…AEVALKHLKG (68 aa). A disordered region spans residues 135-158; that stretch reads PSAVPTRSSPMEVQPPVSPQQSEC. Ser152 bears the Phosphoserine mark. DRBM domains follow at residues 159–227 and 293–361; these read NPVG…RVHT and ACCS…YLKI. A sufficient for interaction with DICER1 region spans residues 228-366; the sequence is VPLDARDGNE…QYLKIMAGSK (139 aa).

It belongs to the TARBP2 family. Self-associates. Component of the RISC loading complex (RLC), or micro-RNA (miRNA) loading complex (miRLC), which is composed of DICER1, AGO2 and TARBP2. Note that the trimeric RLC/miRLC is also referred to as RISC. Interacts with EIF2AK2/PKR and inhibits its protein kinase activity. Interacts with DHX9 and PRKRA. Interacts with DICER1, AGO2, MOV10, EIF6 and RPL7A (60S ribosome subunit); they form a large RNA-induced silencing complex (RISC). Interacts with IRF7; this interaction prevents IRF7 phosphorylation and activation.

It localises to the cytoplasm. The protein resides in the perinuclear region. The protein localises to the nucleus. Functionally, required for formation of the RNA induced silencing complex (RISC). Component of the RISC loading complex (RLC), also known as the micro-RNA (miRNA) loading complex (miRLC), which is composed of DICER1, AGO2 and TARBP2. Within the RLC/miRLC, DICER1 and TARBP2 are required to process precursor miRNAs (pre-miRNAs) to mature miRNAs and then load them onto AGO2. AGO2 bound to the mature miRNA constitutes the minimal RISC and may subsequently dissociate from DICER1 and TARBP2. May also play a role in the production of short interfering RNAs (siRNAs) from double-stranded RNA (dsRNA) by DICER1. Binds in vitro to the PRM1 3'-UTR. Seems to act as a repressor of translation. For some pre-miRNA substrates, may also alter the choice of cleavage site by DICER1. Negatively regulates IRF7-mediated IFN-beta signaling triggered by viral infection by inhibiting the phosphorylation of IRF7 and promoting its 'Lys'-48-linked ubiquitination and degradation. The protein is RISC-loading complex subunit TARBP2 of Bos taurus (Bovine).